The primary structure comprises 399 residues: C-type lectin domain family 4 member M (399 aa).

At 1-49 (MSDSKEQRVQPLGLLEEDPTTSGIRLFPRDFQFQQTHGHKSSTGCLGHG) the chain is on the cytoplasmic side. The Endocytosis signal signature appears at 14-15 (LL). A helical; Signal-anchor for type II membrane protein transmembrane segment spans residues 50 to 70 (PLVLQLLSFTLLAGVLVAILV). At 71 to 399 (QVYKVPSSLS…KKPTACFRDE (329 aa)) the chain is on the extracellular side. N-linked (GlcNAc...) asparagine glycosylation is present at N92. Repeat copies occupy residues 108-130 (KLQE…PEKS), 131-153 (TLQE…PEKS), 154-176 (RLQE…PEKS), 177-199 (KQQE…PEKS), 200-222 (KQQE…PEKS), 223-245 (KQQE…PDQS), and 246-268 (KQQQ…CCRC). Positions 108–269 (KLQEIYQELI…AFERLCCRCP (162 aa)) are 7 X approximate tandem repeats. Cystine bridges form between C265/C395, C268/C279, C296/C389, and C368/C381. In terms of domain architecture, C-type lectin spans 274–390 (FFQGNCYFIS…CNVDNYWICK (117 aa)). Residues E359, N361, S363, E366, N377, and D378 each coordinate Ca(2+). A glycan (N-linked (GlcNAc...) asparagine) is linked at N361.

Homotetramer.

The protein localises to the membrane. Functionally, probable pathogen-recognition receptor involved in peripheral immune surveillance in liver. May mediate the endocytosis of pathogens which are subsequently degraded in lysosomal compartments. Probably recognizes in a calcium-dependent manner high mannose N-linked oligosaccharides in a variety of pathogen antigens. Is a receptor for ICAM3, probably by binding to mannose-like carbohydrates. The polypeptide is C-type lectin domain family 4 member M (CLEC4M) (Hylobates lar (Lar gibbon)).